A 565-amino-acid polypeptide reads, in one-letter code: Frizzled-2 (565 aa).

The signal sequence occupies residues Met1–Ala23. Residues Gln24–Trp247 are Extracellular-facing. Residues Pro34–Gln153 enclose the FZ domain. Cystine bridges form between Cys39-Cys100, Cys47-Cys93, Cys84-Cys121, Cys110-Cys150, and Cys114-Cys138. N-linked (GlcNAc...) asparagine glycosylation is present at Asn53. Asn154 is a glycosylation site (N-linked (GlcNAc...) asparagine). The tract at residues Ala160–Pro189 is disordered. Gly residues predominate over residues Pro174–Ala188. The helical transmembrane segment at Ile248–Val268 threads the bilayer. Residues Asp269 to Pro279 are Cytoplasmic-facing. A helical transmembrane segment spans residues Ile280 to Leu300. Over Gln301–Cys327 the chain is Extracellular. Residues Thr328–Leu348 traverse the membrane as a helical segment. Topologically, residues Ser349 to Gln370 are cytoplasmic. Residues Tyr371–Gly391 traverse the membrane as a helical segment. At Gln392–Gly414 the chain is on the extracellular side. Residues Phe415–Phe435 form a helical membrane-spanning segment. Residues Val436 to Arg461 lie on the Cytoplasmic side of the membrane. The helical transmembrane segment at Ile462–Tyr482 threads the bilayer. The Extracellular segment spans residues Glu483 to Thr519. A helical membrane pass occupies residues Val520–Trp540. Topologically, residues Ser541–Val565 are cytoplasmic. A Lys-Thr-X-X-X-Trp motif, mediates interaction with the PDZ domain of Dvl family members motif is present at residues Lys543–Trp548. Residues Thr563–Val565 carry the PDZ-binding motif.

The protein belongs to the G-protein coupled receptor Fz/Smo family. In terms of assembly, (Microbial infection) Interacts with C.difficile toxin TcdB; frizzled receptors constitute the major host receptors for TcdB in the colonic epithelium. Post-translationally, ubiquitinated by ZNRF3, leading to its degradation by the proteasome. Widely expressed. In the adult, mainly found in heart, placenta, skeletal muscle, lung, kidney, pancreas, prostate, testis, ovary and colon. In the fetus, expressed in brain, lung and kidney. Low levels in fetal liver.

The protein localises to the membrane. It is found in the cell membrane. Functionally, receptor for Wnt proteins. Most of frizzled receptors are coupled to the beta-catenin canonical signaling pathway, which leads to the activation of disheveled proteins, inhibition of GSK-3 kinase, nuclear accumulation of beta-catenin and activation of Wnt target genes. A second signaling pathway involving PKC and calcium fluxes has been seen for some family members, but it is not yet clear if it represents a distinct pathway or if it can be integrated in the canonical pathway, as PKC seems to be required for Wnt-mediated inactivation of GSK-3 kinase. Both pathways seem to involve interactions with G-proteins. May be involved in transduction and intercellular transmission of polarity information during tissue morphogenesis and/or in differentiated tissues. In terms of biological role, (Microbial infection) Acts as a receptor for C.difficile toxin TcdB in the colonic epithelium. TcdB occupies the binding site for Wnt-adducted palmitoleate in frizzled receptors and TcdB-binding prevents Wnt-binding and downstream Wnt signaling. The sequence is that of Frizzled-2 (FZD2) from Homo sapiens (Human).